The chain runs to 131 residues: Large ribosomal subunit protein bL17 (131 aa).

The protein belongs to the bacterial ribosomal protein bL17 family. Part of the 50S ribosomal subunit. Contacts protein L32.

This chain is Large ribosomal subunit protein bL17, found in Bordetella avium (strain 197N).